A 532-amino-acid polypeptide reads, in one-letter code: Drimenyl diphosphate synthase (532 aa).

The (2E,6E)-farnesyl diphosphate site is built by R121, K122, Q152, and W154. E158 provides a ligand contact to Mg(2+). PFTB repeat units follow at residues 275 to 317 (PAAM…RVAG), 325 to 367 (IAAA…APNP), 428 to 469 (KRQA…SRDG), and 475 to 518 (LARA…CVLL). Catalysis depends on D304, which acts as the Proton donor. R502 lines the (2E,6E)-farnesyl diphosphate pocket.

It belongs to the terpene cyclase/mutase family. It depends on Mg(2+) as a cofactor. Requires Ni(2+) as cofactor. The cofactor is Co(2+).

The enzyme catalyses (2E,6E)-farnesyl diphosphate = (5S,9S,10S)-drim-7-en-11-yl diphosphate. Functionally, catalyzes the cyclization of farnesyl diphosphate (FPP) to drimenyl diphosphate. The sequence is that of Drimenyl diphosphate synthase from Streptantibioticus cattleyicolor (strain ATCC 35852 / DSM 46488 / JCM 4925 / NBRC 14057 / NRRL 8057) (Streptomyces cattleya).